We begin with the raw amino-acid sequence, 363 residues long: Fructose-bisphosphate aldolase C (363 aa).

Y5 is modified (phosphotyrosine). Phosphoserine is present on residues S36, S39, and S45. R56 provides a ligand contact to substrate. K111 is modified (N6-acetyllysine). Position 147 (K147) interacts with substrate. The active-site Proton acceptor is the E188. Residue K230 is the Schiff-base intermediate with dihydroxyacetone-P of the active site.

It belongs to the class I fructose-bisphosphate aldolase family. In terms of assembly, homotetramer. Interacts with ATP6V1E1. As to expression, high expression in the adult brain.

The enzyme catalyses beta-D-fructose 1,6-bisphosphate = D-glyceraldehyde 3-phosphate + dihydroxyacetone phosphate. The protein operates within carbohydrate degradation; glycolysis; D-glyceraldehyde 3-phosphate and glycerone phosphate from D-glucose: step 4/4. The chain is Fructose-bisphosphate aldolase C (Aldoc) from Rattus norvegicus (Rat).